A 287-amino-acid chain; its full sequence is Ribosomal RNA small subunit methyltransferase A (287 aa).

6 residues coordinate S-adenosyl-L-methionine: asparagine 28, leucine 30, glycine 55, glutamate 77, aspartate 103, and asparagine 123.

It belongs to the class I-like SAM-binding methyltransferase superfamily. rRNA adenine N(6)-methyltransferase family. RsmA subfamily.

The protein resides in the cytoplasm. It catalyses the reaction adenosine(1518)/adenosine(1519) in 16S rRNA + 4 S-adenosyl-L-methionine = N(6)-dimethyladenosine(1518)/N(6)-dimethyladenosine(1519) in 16S rRNA + 4 S-adenosyl-L-homocysteine + 4 H(+). Functionally, specifically dimethylates two adjacent adenosines (A1518 and A1519) in the loop of a conserved hairpin near the 3'-end of 16S rRNA in the 30S particle. May play a critical role in biogenesis of 30S subunits. The protein is Ribosomal RNA small subunit methyltransferase A of Nitrobacter winogradskyi (strain ATCC 25391 / DSM 10237 / CIP 104748 / NCIMB 11846 / Nb-255).